The chain runs to 480 residues: 3-isopropylmalate dehydratase large subunit (480 aa).

[4Fe-4S] cluster-binding residues include cysteine 360, cysteine 418, and cysteine 421.

This sequence belongs to the aconitase/IPM isomerase family. LeuC type 1 subfamily. In terms of assembly, heterodimer of LeuC and LeuD. [4Fe-4S] cluster is required as a cofactor.

The enzyme catalyses (2R,3S)-3-isopropylmalate = (2S)-2-isopropylmalate. Its pathway is amino-acid biosynthesis; L-leucine biosynthesis; L-leucine from 3-methyl-2-oxobutanoate: step 2/4. In terms of biological role, catalyzes the isomerization between 2-isopropylmalate and 3-isopropylmalate, via the formation of 2-isopropylmaleate. This chain is 3-isopropylmalate dehydratase large subunit, found in Anaeromyxobacter dehalogenans (strain 2CP-1 / ATCC BAA-258).